The sequence spans 701 residues: Larval serum protein 2 (701 aa).

The signal sequence occupies residues 1–21; it reads MKSFTVIALAAVALLATLGQA. An N-linked (GlcNAc...) asparagine glycan is attached at N204.

It belongs to the hemocyanin family. Homohexamer.

The protein localises to the secreted. It is found in the extracellular space. Larval storage protein (LSP) which may serve as a store of amino acids for synthesis of adult proteins. The chain is Larval serum protein 2 (Lsp2) from Drosophila melanogaster (Fruit fly).